Consider the following 619-residue polypeptide: Guanylate cyclase soluble subunit beta-1 (619 aa).

A heme-binding site is contributed by His105. A Guanylate cyclase domain is found at 421–554; sequence TILFSGIVGF…NTVNLTSRTE (134 aa).

This sequence belongs to the adenylyl cyclase class-4/guanylyl cyclase family. In terms of assembly, the active enzyme is formed by a heterodimer of an alpha and a beta subunit. Homotetramer; dimer of dimers (in vitro). Heterodimer with GUCY1A1. Can also form inactive homodimers in vitro. Heme is required as a cofactor. In terms of tissue distribution, lung and brain.

It localises to the cytoplasm. The catalysed reaction is GTP = 3',5'-cyclic GMP + diphosphate. Activated by nitric oxide in the presence of magnesium or manganese ions. Functionally, mediates responses to nitric oxide (NO) by catalyzing the biosynthesis of the signaling molecule cGMP. The polypeptide is Guanylate cyclase soluble subunit beta-1 (Gucy1b1) (Rattus norvegicus (Rat)).